The chain runs to 280 residues: Killer cell lectin-like receptor 7 (280 aa).

The Cytoplasmic segment spans residues 1-44 (MSEQEVTYSTVRFHESSRLQKLVRTEEPQRPREACYREYSVPWK). The helical; Signal-anchor for type II membrane protein transmembrane segment at 45 to 66 (LIVIACGILCFLLLVTVALLAI) threads the bilayer. At 67–280 (TIFQHSQQKH…CGKRLDKFPH (214 aa)) the chain is on the extracellular side. Residue Asn104 is glycosylated (N-linked (GlcNAc...) asparagine). One can recognise a C-type lectin domain in the interval 156–275 (GFEKYWFCYG…SYICICGKRL (120 aa)). Cystine bridges form between Cys163-Cys168, Cys181-Cys269, Cys185-Cys271, and Cys250-Cys263. A glycan (N-linked (GlcNAc...) asparagine) is linked at Asn239.

As to quaternary structure, homodimer; disulfide-linked.

It localises to the membrane. Receptor on natural killer (NK) cells for class I MHC. In Mus musculus (Mouse), this protein is Killer cell lectin-like receptor 7 (Klra7).